The chain runs to 147 residues: Large ribosomal subunit protein uL13 (147 aa).

Belongs to the universal ribosomal protein uL13 family. In terms of assembly, part of the 50S ribosomal subunit.

Functionally, this protein is one of the early assembly proteins of the 50S ribosomal subunit, although it is not seen to bind rRNA by itself. It is important during the early stages of 50S assembly. The sequence is that of Large ribosomal subunit protein uL13 from Lactobacillus johnsonii (strain CNCM I-12250 / La1 / NCC 533).